The following is a 302-amino-acid chain: Mitochondrial glycine transporter (302 aa).

Solcar repeat units lie at residues 22–112, 119–203, and 213–297; these read HPVF…LKHH, PKPL…AKKL, and FSPV…MMEK. 6 helical membrane-spanning segments follow: residues 28-53, 87-113, 125-150, 178-201, 217-243, and 272-290; these read FVCGSLSGTCSTLLFQPLDLVKTRIQ, GVSPSFLRCIPGVGLYFSTLYTLKHHF, VMLGAGSRTVAAVCMLPFTVVKTRYE, GLTATLMRDAPFSGIYLMFYTRAK, LNFSCGIVAGILASVATQPADVIKTHM, and GGVPRALRRTLMAAMAWTV.

Belongs to the mitochondrial carrier (TC 2.A.29) family. SLC25A38 subfamily.

It is found in the mitochondrion inner membrane. The catalysed reaction is glycine(in) = glycine(out). Functionally, mitochondrial glycine transporter that imports glycine into the mitochondrial matrix. Plays an important role in providing glycine for the first enzymatic step in heme biosynthesis, the condensation of glycine with succinyl-CoA to produce 5-aminolevulinate (ALA) in the mitochondrial matrix. Required during erythropoiesis. Its function is as follows. May play a role as pro-apoptotic protein that induces caspase-dependent apoptosis. This chain is Mitochondrial glycine transporter, found in Xenopus laevis (African clawed frog).